Here is a 206-residue protein sequence, read N- to C-terminus: Small ribosomal subunit protein eS1 (206 aa).

It belongs to the eukaryotic ribosomal protein eS1 family.

This chain is Small ribosomal subunit protein eS1, found in Methanocorpusculum labreanum (strain ATCC 43576 / DSM 4855 / Z).